The following is a 206-amino-acid chain: 21.9 kDa heat shock protein (206 aa).

Positions 1–29 are cleaved as a signal peptide; it reads MAAVAEREVLGMVAAVAAMVVMMAPPAAA. The sHSP domain occupies 65–187; sequence EPAAVALARC…GREPRVVAID (123 aa). Residues 94-96 carry the Cell attachment site motif; that stretch reads RGD.

This sequence belongs to the small heat shock protein (HSP20) family. As to quaternary structure, may form oligomeric structures.

The protein resides in the endoplasmic reticulum. This Oryza sativa subsp. japonica (Rice) protein is 21.9 kDa heat shock protein (HSP21.9).